Reading from the N-terminus, the 408-residue chain is Bifunctional polynucleotide phosphatase/kinase (408 aa).

The disordered stretch occupies residues 1–38; the sequence is MSSKKRKSPPQESLTSYFEKSSKSSKKYGSQNKDSDSS. The residue at position 8 (S8) is a Phosphoserine. Composition is skewed to polar residues over residues 10–19 and 28–38; these read PQESLTSYFE and YGSQNKDSDSS. ATP is bound at residue 263–270; it reads GFPSSGKS.

In the N-terminal section; belongs to the DNA 3' phosphatase family.

The protein resides in the nucleus. It carries out the reaction a 3'end (2'-deoxyribonucleotide 3'-phosphate)-DNA + H2O = a 3'-end 2'-deoxyribonucleotide-DNA + phosphate. It catalyses the reaction a 5'-end dephospho-2'-deoxyribonucleoside-DNA + ATP = a 5'-end 5'-phospho-2'-deoxyribonucleoside-DNA + ADP + H(+). In terms of biological role, catalyzes the phosphorylation of DNA at 5'-hydroxyl termini and can dephosphorylate its 3'-phosphate termini. Has a role in the repair of breaks in single-stranded DNA. This chain is Bifunctional polynucleotide phosphatase/kinase (pnk1), found in Schizosaccharomyces pombe (strain 972 / ATCC 24843) (Fission yeast).